A 112-amino-acid polypeptide reads, in one-letter code: UPF0482 protein Ent638_1930 (112 aa).

The signal sequence occupies residues 1 to 27; it reads MTTLRKRLCLATLLSLTALAFTAPVSA.

It belongs to the UPF0482 family.

In Enterobacter sp. (strain 638), this protein is UPF0482 protein Ent638_1930.